A 461-amino-acid chain; its full sequence is Cysteine--tRNA ligase (461 aa).

C28 is a binding site for Zn(2+). A 'HIGH' region motif is present at residues 30 to 40 (ITVYDLCHIGH). Zn(2+) is bound by residues C209, H234, and E238. A 'KMSKS' region motif is present at residues 266 to 270 (KMSKS). K269 lines the ATP pocket.

Belongs to the class-I aminoacyl-tRNA synthetase family. In terms of assembly, monomer. Zn(2+) is required as a cofactor.

The protein localises to the cytoplasm. The enzyme catalyses tRNA(Cys) + L-cysteine + ATP = L-cysteinyl-tRNA(Cys) + AMP + diphosphate. This Shigella sonnei (strain Ss046) protein is Cysteine--tRNA ligase.